A 108-amino-acid chain; its full sequence is Replication restart protein PriB (108 aa).

The SSB domain maps to 8–108 (VDNRFSLIGK…LHAEQIEFIE (101 aa)).

It belongs to the PriB family. As to quaternary structure, homodimer. Interacts with PriA and DnaT. Component of the replication restart primosome. Primosome assembly occurs via a 'hand-off' mechanism. PriA binds to replication forks, subsequently PriB then DnaT bind; DnaT then displaces ssDNA to generate the helicase loading substrate.

Its function is as follows. Involved in the restart of stalled replication forks, which reloads the replicative helicase on sites other than the origin of replication; the PriA-PriB pathway is the major replication restart pathway. During primosome assembly it facilitates complex formation between PriA and DnaT on DNA; stabilizes PriA on DNA. Stimulates the DNA unwinding activity of PriA helicase. This is Replication restart protein PriB from Histophilus somni (strain 129Pt) (Haemophilus somnus).